Reading from the N-terminus, the 351-residue chain is Phosphate acyltransferase (351 aa).

Belongs to the PlsX family. As to quaternary structure, homodimer. Probably interacts with PlsY.

The protein resides in the cytoplasm. The enzyme catalyses a fatty acyl-[ACP] + phosphate = an acyl phosphate + holo-[ACP]. It functions in the pathway lipid metabolism; phospholipid metabolism. Catalyzes the reversible formation of acyl-phosphate (acyl-PO(4)) from acyl-[acyl-carrier-protein] (acyl-ACP). This enzyme utilizes acyl-ACP as fatty acyl donor, but not acyl-CoA. The protein is Phosphate acyltransferase of Neisseria meningitidis serogroup B (strain ATCC BAA-335 / MC58).